Here is a 103-residue protein sequence, read N- to C-terminus: Large ribosomal subunit protein uL23 (103 aa).

It belongs to the universal ribosomal protein uL23 family. As to quaternary structure, part of the 50S ribosomal subunit. Contacts protein L29, and trigger factor when it is bound to the ribosome.

Its function is as follows. One of the early assembly proteins it binds 23S rRNA. One of the proteins that surrounds the polypeptide exit tunnel on the outside of the ribosome. Forms the main docking site for trigger factor binding to the ribosome. The protein is Large ribosomal subunit protein uL23 of Chlorobium phaeobacteroides (strain DSM 266 / SMG 266 / 2430).